Reading from the N-terminus, the 310-residue chain is GMP synthase [glutamine-hydrolyzing] subunit B (310 aa).

One can recognise a GMPS ATP-PPase domain in the interval 1 to 187 (MSFSDYISRI…LGLPTDIQPF (187 aa)). Position 27-33 (27-33 (SGGQDSS)) interacts with ATP.

As to quaternary structure, heterodimer composed of a glutamine amidotransferase subunit (A) and a GMP-binding subunit (B).

The catalysed reaction is XMP + L-glutamine + ATP + H2O = GMP + L-glutamate + AMP + diphosphate + 2 H(+). The protein operates within purine metabolism; GMP biosynthesis; GMP from XMP (L-Gln route): step 1/1. Its function is as follows. Catalyzes the synthesis of GMP from XMP. This chain is GMP synthase [glutamine-hydrolyzing] subunit B (guaAB), found in Thermoplasma volcanium (strain ATCC 51530 / DSM 4299 / JCM 9571 / NBRC 15438 / GSS1).